Here is a 445-residue protein sequence, read N- to C-terminus: Glycerophosphocholine choline phosphodiesterase ENPP6 (445 aa).

The first 22 residues, 1-22 (MAGKLGVLLLALVLSLAQPASA), serve as a signal peptide directing secretion. Substrate is bound by residues Asp-32, Ser-71, and Asn-92. Positions 32 and 71 each coordinate Zn(2+). Ser-71 serves as the catalytic Nucleophile. Residue Ser-71 is modified to Phosphoserine. N-linked (GlcNAc...) asparagine glycosylation is found at Asn-100 and Asn-118. The cysteines at positions 142 and 154 are disulfide-linked. Substrate is bound at residue Asp-193. Zn(2+)-binding residues include Asp-193, His-197, Asp-240, and His-241. Residue His-241 coordinates substrate. A glycan (N-linked (GlcNAc...) asparagine) is linked at Asn-341. Residue His-356 participates in substrate binding. His-356 lines the Zn(2+) pocket. Asn-406 is a glycosylation site (N-linked (GlcNAc...) asparagine). Ser-421 is lipidated: GPI-anchor amidated serine. Positions 422-445 (SAPGAPPCACALVTVLLVLLAILA) are cleaved as a propeptide — removed in mature form.

The protein belongs to the nucleotide pyrophosphatase/phosphodiesterase family. As to quaternary structure, homodimer; disulfide-linked. Homotetramer. Zn(2+) is required as a cofactor.

The protein localises to the cell membrane. It catalyses the reaction sn-glycerol 3-phosphocholine + H2O = phosphocholine + glycerol + H(+). The enzyme catalyses a 1-acyl-sn-glycero-3-phosphocholine + H2O = a 1-acyl-sn-glycerol + phosphocholine + H(+). It carries out the reaction a 1-O-alkyl-sn-glycero-3-phosphocholine + H2O = a 1-O-alkyl-sn-glycerol + phosphocholine + H(+). The catalysed reaction is 1-dodecanoyl-sn-glycero-3-phosphocholine + H2O = 1-dodecanoyl-sn-glycerol + phosphocholine + H(+). It catalyses the reaction 1-hexadecanoyl-sn-glycero-3-phosphocholine + H2O = 1-hexadecanoyl-sn-glycerol + phosphocholine + H(+). The enzyme catalyses 1-(5Z,8Z,11Z,14Z-eicosatetraenoyl)-sn-glycero-3-phosphocholine + H2O = 1-(5Z,8Z,11Z,14Z-eicosatetraenoyl)-sn-glycerol + phosphocholine + H(+). It carries out the reaction 1-tetradecanoyl-sn-glycero-3-phosphocholine + H2O = 1-tetradecanoyl-sn-glycerol + phosphocholine + H(+). The catalysed reaction is sphing-4-enine-phosphocholine + H2O = sphing-4-enine + phosphocholine + H(+). It catalyses the reaction 1-(9Z-octadecenoyl)-sn-glycero-3-phosphocholine + H2O = 1-(9Z-octadecenoyl)-sn-glycerol + phosphocholine + H(+). The enzyme catalyses 1-(9Z,12Z)-octadecadienoyl-sn-glycero-3-phosphocholine + H2O = 1-(9Z,12Z-octadecadienoyl)-sn-glycerol + phosphocholine + H(+). It carries out the reaction glycero-2-phosphocholine + H2O = phosphocholine + glycerol + H(+). Inhibited by EDTA and EGTA in vitro. In terms of biological role, choline-specific glycerophosphodiesterase that hydrolyzes glycerophosphocholine (GPC) and lysophosphatidylcholine (LPC) and contributes to supplying choline to the cells. Has a preference for LPC with short (12:0 and 14:0) or polyunsaturated (18:2 and 20:4) fatty acids. In vitro, hydrolyzes only choline-containing lysophospholipids, such as sphingosylphosphorylcholine (SPC), platelet-activating factor (PAF) and lysoPAF, but not other lysophospholipids. The polypeptide is Glycerophosphocholine choline phosphodiesterase ENPP6 (Bos taurus (Bovine)).